We begin with the raw amino-acid sequence, 861 residues long: Linoleate 9S-lipoxygenase 2 (861 aa).

Residues 29–160 form the PLAT domain; the sequence is NALDFTDLAG…RYKSDRIFFV (132 aa). A Lipoxygenase domain is found at 163-861; sequence PYLPSKTPEL…GKGIPNSVSI (699 aa). A disordered region spans residues 212–246; it reads EGKENVRTTLGGSAEYPYPRRGRTGRPPTRTDPKS. Residues H522, H527, H713, N717, and I861 each coordinate Fe cation.

Belongs to the lipoxygenase family. Monomer. Fe cation is required as a cofactor. Highly expressed in tubers and roots. Detected in flower buds and leaves.

The protein localises to the cytoplasm. The catalysed reaction is (9Z,12Z)-octadecadienoate + O2 = (9S)-hydroperoxy-(10E,12Z)-octadecadienoate. It functions in the pathway lipid metabolism; oxylipin biosynthesis. In terms of biological role, plant lipoxygenases may be involved in a number of diverse aspects of plant physiology including growth and development, pest resistance, and senescence or responses to wounding. Catalyzes the hydroperoxidation of lipids containing a cis,cis-1,4-pentadiene structure. Linoleic acid is the preferred substrate, but is also active with linolenic and arachidonic acids. This is Linoleate 9S-lipoxygenase 2 (LOX1.2) from Solanum tuberosum (Potato).